We begin with the raw amino-acid sequence, 138 residues long: Basic phospholipase A2 vurtoxin (138 aa).

Positions 1–16 (MRTLWIVAVCLIGVEG) are cleaved as a signal peptide. 7 cysteine pairs are disulfide-bonded: Cys-42-Cys-131, Cys-44-Cys-60, Cys-59-Cys-111, Cys-65-Cys-138, Cys-66-Cys-104, Cys-73-Cys-97, and Cys-91-Cys-102. Tyr-43, Gly-45, and Gly-47 together coordinate Ca(2+). The active site involves His-63. Asp-64 contributes to the Ca(2+) binding site. Residue Asp-105 is part of the active site.

Requires Ca(2+) as cofactor. Expressed by the venom gland.

The protein localises to the secreted. It carries out the reaction a 1,2-diacyl-sn-glycero-3-phosphocholine + H2O = a 1-acyl-sn-glycero-3-phosphocholine + a fatty acid + H(+). In terms of biological role, snake venom phospholipase A2 that may have a strong anticoagulant activity. Is able to suppress the acetylcholine (ACh)-evoked current mediated by alpha-7 (CHRNA7)-similar nAChRs in L.stagnalis neurons (IC(50)=10.5 uM) and to compete with alpha-bungarotoxin for binding to muscle- and alpha-7 neuronal nAChR types, as well as to AChBPs. In inhibition of alpha-bungarotoxin binding, this toxin is mostly active against T.californica nAChR (IC(50)=0.26 uM), it is moderately active against human alpha-7 nAChR (IC(50)=14 uM), and is not active against L.stagnalis and A.californica AChBP (IC(50)&gt;30 uM). In Vipera renardi (Steppe viper), this protein is Basic phospholipase A2 vurtoxin.